The following is a 392-amino-acid chain: MALQPAAGARDLNPHQVETNRNITERLARVFRLWGYDEVSPPRVERMKTLMAGGAIASRDIVRLVADDPLGLRPEMTASIARAACTRLATRPRPMRLWASGTVFRSRAADEGGQCIEENLQSGVELFGVAAIEAEMELLSLLMASIASLKLGPSTQPRLLLGHTQLMELILSPYEGPKRDAVRWALVHFDRLAVETMELLPNERKTLLSLMECRGTPKDVLQQLRHLFGQQPVFEDLDRLCSLLSKTALEQDIALQLDPTFQPQFELYTGLVFQLVCNGRSAPVVLARGGRYDELVQRCGAPENQAFGAGFSLAIDPIRELLVEDESAKADTTDVLVAYSSNSNLETALDHQQQWHAKGHSAVLELQPIRSMDEAQALAQARGDLQLDWVDL.

The protein belongs to the class-II aminoacyl-tRNA synthetase family. HisZ subfamily. As to quaternary structure, heteromultimer composed of HisG and HisZ subunits.

Its subcellular location is the cytoplasm. The protein operates within amino-acid biosynthesis; L-histidine biosynthesis; L-histidine from 5-phospho-alpha-D-ribose 1-diphosphate: step 1/9. Required for the first step of histidine biosynthesis. May allow the feedback regulation of ATP phosphoribosyltransferase activity by histidine. The chain is ATP phosphoribosyltransferase regulatory subunit from Synechococcus sp. (strain CC9902).